The primary structure comprises 219 residues: MAAWMAGRQKWLLHPAAKPLIFMVCLLPFAWLFYAAWSDQLGANPAEALVRATGDWTLRFVCIVLAVTPLRVITRTPALARFRRMLGLFAYFYVVLHLLSYSWFDMGFDVADIARDIAKRPFILVGFSAFVLLTPLAATSFNAAIKAMGAKRWQLLHKLVYLIAGLGLLHFFWMRAGKNNFNEVFVYAAIVALLLGWRVWNHWAKARRRVSNNAAVGVH.

5 helical membrane passes run 17–37, 88–108, 121–141, 153–173, and 184–204; these read AKPLIFMVCLLPFAWLFYAAW, LFAYFYVVLHLLSYSWFDMGF, PFILVGFSAFVLLTPLAATSF, WQLLHKLVYLIAGLGLLHFFW, and VFVYAAIVALLLGWRVWNHWA.

Belongs to the MsrQ family. In terms of assembly, heterodimer of a catalytic subunit (MsrP) and a heme-binding subunit (MsrQ). The cofactor is FMN. Heme b is required as a cofactor.

It is found in the cell inner membrane. Its function is as follows. Part of the MsrPQ system that repairs oxidized periplasmic proteins containing methionine sulfoxide residues (Met-O), using respiratory chain electrons. Thus protects these proteins from oxidative-stress damage caused by reactive species of oxygen and chlorine generated by the host defense mechanisms. MsrPQ is essential for the maintenance of envelope integrity under bleach stress, rescuing a wide series of structurally unrelated periplasmic proteins from methionine oxidation. MsrQ provides electrons for reduction to the reductase catalytic subunit MsrP, using the quinone pool of the respiratory chain. In Polaromonas naphthalenivorans (strain CJ2), this protein is Protein-methionine-sulfoxide reductase heme-binding subunit MsrQ.